The following is a 166-amino-acid chain: MRKHRGKPANSDLAELVHGSMAGELGFHLRRGQIAAFRQFARTITTTEGVTPGLYGMLQVIANNPGLSQSALAVAMDVDRSSIVKVVNQLEEKGLIVRDTSPTDRRRYCLHMTPPGVQALARIEQAVMRQDQDFSARLSDAERGTLIGLLKRLYRQDSETPANVRE.

The HTH marR-type domain maps to 1-155 (MRKHRGKPAN…LIGLLKRLYR (155 aa)).

Its function is as follows. May be involved in the regulation of genes for 4-hydroxybenzoyl-CoA reductase. The protein is Putative transcriptional regulatory protein for hcr operon of Thauera aromatica.